The primary structure comprises 591 residues: V-type ATP synthase alpha chain (591 aa).

233 to 240 (GPFGAGKT) is an ATP binding site.

Belongs to the ATPase alpha/beta chains family.

The catalysed reaction is ATP + H2O + 4 H(+)(in) = ADP + phosphate + 5 H(+)(out). In terms of biological role, produces ATP from ADP in the presence of a proton gradient across the membrane. The V-type alpha chain is a catalytic subunit. In Streptococcus pneumoniae (strain Hungary19A-6), this protein is V-type ATP synthase alpha chain.